The sequence spans 346 residues: Threonylcarbamoyl-AMP synthase (346 aa).

Residues 18 to 205 (DPQIAQAAAL…IPVLLRPGGI (188 aa)) enclose the YrdC-like domain. L-threonine is bound at residue threonine 40. Arginine 63 and asparagine 67 together coordinate ATP. Histidine 72 provides a ligand contact to L-threonine. ATP is bound at residue threonine 123. L-threonine-binding residues include arginine 127 and alanine 147. Residues serine 149 and serine 157 each coordinate ATP. Serine 187 is an L-threonine binding site. Residues arginine 201 and tyrosine 240 each contribute to the ATP site.

It belongs to the SUA5 family.

It is found in the cytoplasm. The enzyme catalyses L-threonine + hydrogencarbonate + ATP = L-threonylcarbamoyladenylate + diphosphate + H2O. In terms of biological role, required for the formation of a threonylcarbamoyl group on adenosine at position 37 (t(6)A37) in tRNAs that read codons beginning with adenine. Catalyzes the conversion of L-threonine, HCO(3)(-)/CO(2) and ATP to give threonylcarbamoyl-AMP (TC-AMP) as the acyladenylate intermediate, with the release of diphosphate. Is also able to catalyze the reverse reaction in vitro, i.e. the formation of ATP from TC-AMP and PPi. The sequence is that of Threonylcarbamoyl-AMP synthase (ywlC) from Bacillus subtilis (strain 168).